The sequence spans 201 residues: Molybdenum cofactor guanylyltransferase (201 aa).

GTP is bound by residues 14–16 (LAG), K31, and D104. D104 serves as a coordination point for Mg(2+).

It belongs to the MobA family. As to quaternary structure, monomer. Mg(2+) is required as a cofactor.

It localises to the cytoplasm. The catalysed reaction is Mo-molybdopterin + GTP + H(+) = Mo-molybdopterin guanine dinucleotide + diphosphate. Its function is as follows. Transfers a GMP moiety from GTP to Mo-molybdopterin (Mo-MPT) cofactor (Moco or molybdenum cofactor) to form Mo-molybdopterin guanine dinucleotide (Mo-MGD) cofactor. The protein is Molybdenum cofactor guanylyltransferase of Helicobacter pylori (strain P12).